A 790-amino-acid polypeptide reads, in one-letter code: Probable quinate dehydrogenase (quinone) (790 aa).

4 consecutive transmembrane segments (helical) span residues 22–42 (GSWY…LIVL), 48–68 (ALVY…DAGL), 77–94 (LMLP…WPAL), and 106–126 (AYGV…GMFV). A disordered region spans residues 171 to 200 (RSNGRPAAGSPGPTTPGEIANSDGNGAEDQ). Residues 174–187 (GRPAAGSPGPTTPG) are compositionally biased toward low complexity.

It belongs to the bacterial PQQ dehydrogenase family. Pyrroloquinoline quinone is required as a cofactor.

It localises to the cell membrane. The catalysed reaction is L-quinate + a quinone = 3-dehydroquinate + a quinol. Its pathway is aromatic compound metabolism; 3,4-dihydroxybenzoate biosynthesis; 3-dehydroquinate from D-quinate (PQQ route): step 1/1. This chain is Probable quinate dehydrogenase (quinone) (qumA), found in Xanthomonas campestris pv. juglandis (Xanthomonas arboricola pv. juglandis).